The following is a 387-amino-acid chain: Eukaryotic translation initiation factor 3 subunit M (387 aa).

Residues 181 to 340 (LSSKVMIELL…RKVHISSTMH (160 aa)) enclose the PCI domain.

This sequence belongs to the eIF-3 subunit M family. In terms of assembly, component of the eukaryotic translation initiation factor 3 (eIF-3) complex. The eIF-3 complex interacts with pix.

The protein localises to the cytoplasm. It is found in the golgi apparatus. In terms of biological role, component of the eukaryotic translation initiation factor 3 (eIF-3) complex, which is involved in protein synthesis of a specialized repertoire of mRNAs and, together with other initiation factors, stimulates binding of mRNA and methionyl-tRNAi to the 40S ribosome. The eIF-3 complex specifically targets and initiates translation of a subset of mRNAs involved in cell proliferation. The polypeptide is Eukaryotic translation initiation factor 3 subunit M (Drosophila grimshawi (Hawaiian fruit fly)).